A 91-amino-acid polypeptide reads, in one-letter code: MTKGTFSFGRRHTKSHTLCRRCGKSSFHIQKKTCASCGYPSAKTRSYNWSIKAQRRKTTGTGRTRYLKTVHKRFNSGFKEASLAVKKTAAK.

Residues cysteine 19, cysteine 22, cysteine 34, and cysteine 37 each contribute to the Zn(2+) site. The C4-type zinc finger occupies 19–37; the sequence is CRRCGKSSFHIQKKTCASC.

This sequence belongs to the eukaryotic ribosomal protein eL37 family. Zn(2+) is required as a cofactor.

In terms of biological role, binds to the 23S rRNA. This chain is Large ribosomal subunit protein eL37 (rpl37), found in Dictyostelium discoideum (Social amoeba).